The following is a 661-amino-acid chain: UvrABC system protein B (661 aa).

In terms of domain architecture, Helicase ATP-binding spans 23–180; it reads EGLQKGYRIQ…THLARIGYER (158 aa). 36 to 43 contributes to the ATP binding site; sequence GVTGSGKT. The short motif at 89–112 is the Beta-hairpin element; it reads YYDYYQPEAYIPTRDLYIEKNADI. The region spanning 426–592 is the Helicase C-terminal domain; the sequence is QIDDLVNEIA…TIIKPLDEEI (167 aa). The 36-residue stretch at 620–655 folds into the UVR domain; it reads EEYIALLEEEMYKAASELRYEDAARLRDELFNIREK.

The protein belongs to the UvrB family. As to quaternary structure, forms a heterotetramer with UvrA during the search for lesions. Interacts with UvrC in an incision complex.

The protein resides in the cytoplasm. Functionally, the UvrABC repair system catalyzes the recognition and processing of DNA lesions. A damage recognition complex composed of 2 UvrA and 2 UvrB subunits scans DNA for abnormalities. Upon binding of the UvrA(2)B(2) complex to a putative damaged site, the DNA wraps around one UvrB monomer. DNA wrap is dependent on ATP binding by UvrB and probably causes local melting of the DNA helix, facilitating insertion of UvrB beta-hairpin between the DNA strands. Then UvrB probes one DNA strand for the presence of a lesion. If a lesion is found the UvrA subunits dissociate and the UvrB-DNA preincision complex is formed. This complex is subsequently bound by UvrC and the second UvrB is released. If no lesion is found, the DNA wraps around the other UvrB subunit that will check the other stand for damage. This Thermosipho africanus (strain TCF52B) protein is UvrABC system protein B.